The primary structure comprises 161 residues: Ribonuclease P protein component 2 (161 aa).

The protein belongs to the eukaryotic/archaeal RNase P protein component 2 family. Consists of a catalytic RNA component and at least 4-5 protein subunits.

Its subcellular location is the cytoplasm. The enzyme catalyses Endonucleolytic cleavage of RNA, removing 5'-extranucleotides from tRNA precursor.. Part of ribonuclease P, a protein complex that generates mature tRNA molecules by cleaving their 5'-ends. The polypeptide is Ribonuclease P protein component 2 (Haloarcula marismortui (strain ATCC 43049 / DSM 3752 / JCM 8966 / VKM B-1809) (Halobacterium marismortui)).